The following is a 413-amino-acid chain: Hemolin (413 aa).

The N-terminal stretch at 1–19 (MAFKSIAVLSACIIVGSAL) is a signal peptide. 4 consecutive Ig-like C2-type domains span residues 25–112 (PVLK…RVIS), 122–211 (PAKT…EEVV), 233–322 (PQYV…LKLT), and 327–413 (PKYE…VQVN). Cystine bridges form between Cys46–Cys97, Cys140–Cys199, Cys252–Cys305, and Cys349–Cys395. The N-linked (GlcNAc...) asparagine glycan is linked to Asn283.

This sequence belongs to the hemolin family. As to expression, hemolymph.

The protein resides in the secreted. It is found in the extracellular space. Its function is as follows. Insect-immune protein. Forms a protein complex at the bacterial surface. Can inhibit hemocyte aggregation. This chain is Hemolin, found in Hyalophora cecropia (Cecropia moth).